The primary structure comprises 118 residues: MSKKENIIGNKNRTQKYNNACLTRSDVYALVKETINKRKHDGEFCNITAHIFDEGFEQQKEYIREKLSTASIVTDCRQNRKRLALHRKKIESIFNIHTSLQEEFNSCSRRYNGSPNLE.

This sequence belongs to the baculoviridae LEF-11 family.

Its function is as follows. Involved in late/very late gene activation. The protein is Late expression factor 11 (LEF-11) of Adoxophyes honmai nucleopolyhedrovirus.